The chain runs to 274 residues: Pre-rRNA-processing protein PNO1 (274 aa).

Positions 1-70 (MVAPTALKKA…GSRKTHESKT (70 aa)) are disordered. Residues 33 to 48 (SIDEDDDDDVLLDDSD) show a composition bias toward acidic residues. Phosphoserine is present on Ser-47. Thr-51 is subject to Phosphothreonine. The segment covering 51–69 (TAKEEVEGEEGSRKTHESK) has biased composition (basic and acidic residues). One can recognise a KH domain in the interval 195 to 247 (GDHLSRAIGRIAGKDGKTKFAIENATRTRIVLADSKIHILGGFTHIRMARESV).

Belongs to the PNO1 family. As to quaternary structure, component of the small ribosomal subunit, ribosomal RNA processing complex (SSU RRP complex). Interacts with NOB1.

The protein localises to the cytoplasm. The protein resides in the nucleus. It is found in the nucleolus. Functionally, required for small ribosomal subunit (SSU) synthesis. Has a role in the processing of early nucleolar and late cytoplasmic pre-RNA species. Recruits DIM1 to nucleolar pre-RNAs. Indirectly required for cleavage at the A2 site of the 20S pre-rRNA, forming 18S rRNA, and at A1 and A2 sites of other pre-rRNAs. This is Pre-rRNA-processing protein PNO1 (PNO1) from Saccharomyces cerevisiae (strain ATCC 204508 / S288c) (Baker's yeast).